Here is a 185-residue protein sequence, read N- to C-terminus: ATP synthase subunit delta, chloroplastic (185 aa).

This sequence belongs to the ATPase delta chain family. In terms of assembly, F-type ATPases have 2 components, F(1) - the catalytic core - and F(0) - the membrane proton channel. F(1) has five subunits: alpha(3), beta(3), gamma(1), delta(1), epsilon(1). CF(0) has four main subunits: a(1), b(1), b'(1) and c(10-14). The alpha and beta chains form an alternating ring which encloses part of the gamma chain. F(1) is attached to F(0) by a central stalk formed by the gamma and epsilon chains, while a peripheral stalk is formed by the delta, b and b' chains.

The protein resides in the plastid. The protein localises to the chloroplast thylakoid membrane. Its function is as follows. F(1)F(0) ATP synthase produces ATP from ADP in the presence of a proton or sodium gradient. F-type ATPases consist of two structural domains, F(1) containing the extramembraneous catalytic core and F(0) containing the membrane proton channel, linked together by a central stalk and a peripheral stalk. During catalysis, ATP synthesis in the catalytic domain of F(1) is coupled via a rotary mechanism of the central stalk subunits to proton translocation. Functionally, this protein is part of the stalk that links CF(0) to CF(1). It either transmits conformational changes from CF(0) to CF(1) or is implicated in proton conduction. The sequence is that of ATP synthase subunit delta, chloroplastic from Guillardia theta (Cryptophyte).